Here is a 406-residue protein sequence, read N- to C-terminus: Isocitrate dehydrogenase [NADP] (406 aa).

NADP(+) contacts are provided by Lys72, Thr75, Thr77, and Arg82. Residues Ser94, Asn96, Arg100, Glu110, and Arg132 each coordinate D-threo-isocitrate. 3 residues coordinate Mn(2+): Asp250, Asp273, and Asp277. Gly308, Thr309, Val310, His313, and Asn326 together coordinate NADP(+).

This sequence belongs to the isocitrate and isopropylmalate dehydrogenases family. In terms of assembly, homodimer. Mg(2+) serves as cofactor. Requires Mn(2+) as cofactor.

The catalysed reaction is D-threo-isocitrate + NADP(+) = 2-oxoglutarate + CO2 + NADPH. Its function is as follows. Catalyzes the oxidative decarboxylation of isocitrate to 2-oxoglutarate and carbon dioxide with the concomitant reduction of NADP(+). This is Isocitrate dehydrogenase [NADP] (icd) from Sphingobium yanoikuyae (Sphingomonas yanoikuyae).